The following is a 212-amino-acid chain: Uracil phosphoribosyltransferase (212 aa).

5-phospho-alpha-D-ribose 1-diphosphate is bound by residues R78, R103, and 130 to 138; that span reads DPMLATGGS. Uracil-binding positions include I193 and 198 to 200; that span reads GDA. D199 serves as a coordination point for 5-phospho-alpha-D-ribose 1-diphosphate.

It belongs to the UPRTase family. It depends on Mg(2+) as a cofactor.

It catalyses the reaction UMP + diphosphate = 5-phospho-alpha-D-ribose 1-diphosphate + uracil. It functions in the pathway pyrimidine metabolism; UMP biosynthesis via salvage pathway; UMP from uracil: step 1/1. Its activity is regulated as follows. Allosterically activated by GTP. Functionally, catalyzes the conversion of uracil and 5-phospho-alpha-D-ribose 1-diphosphate (PRPP) to UMP and diphosphate. This Pseudomonas paraeruginosa (strain DSM 24068 / PA7) (Pseudomonas aeruginosa (strain PA7)) protein is Uracil phosphoribosyltransferase.